Here is a 163-residue protein sequence, read N- to C-terminus: Nucleotide-binding protein YajQ (163 aa).

Belongs to the YajQ family.

In terms of biological role, nucleotide-binding protein. This Escherichia coli (strain K12 / DH10B) protein is Nucleotide-binding protein YajQ.